The sequence spans 214 residues: uncharacterized protein (214 aa).

Positions 1–24 are cleaved as a signal peptide; sequence MKIWIKAICITSFVIQMSACSSSA. Positions 64-197 constitute a TNase-like domain; sequence ETVKGKVLHI…KEAKAGVWSI (134 aa). Active-site residues include Arg-91, Glu-99, and Arg-142.

This is an uncharacterized protein from Bacillus anthracis.